The sequence spans 99 residues: Ferredoxin (99 aa).

Residues 4 to 96 enclose the 2Fe-2S ferredoxin-type domain; it reads YKIHLLCEEE…DCTISTHVEQ (93 aa). [2Fe-2S] cluster-binding residues include Cys42, Cys47, Cys50, and Cys80.

This sequence belongs to the 2Fe2S plant-type ferredoxin family. As to quaternary structure, forms a complex with heterodimeric ferredoxin-thioredoxin reductase (FTR) and thioredoxin. [2Fe-2S] cluster serves as cofactor.

It localises to the plastid. It is found in the chloroplast. Its function is as follows. Ferredoxins are iron-sulfur proteins that transfer electrons in a wide variety of metabolic reactions. The protein is Ferredoxin (petF) of Pyropia yezoensis (Susabi-nori).